The sequence spans 106 residues: Small ribosomal subunit protein uS10 (106 aa).

This sequence belongs to the universal ribosomal protein uS10 family. As to quaternary structure, part of the 30S ribosomal subunit.

Functionally, involved in the binding of tRNA to the ribosomes. The protein is Small ribosomal subunit protein uS10 of Pyrobaculum neutrophilum (strain DSM 2338 / JCM 9278 / NBRC 100436 / V24Sta) (Thermoproteus neutrophilus).